The chain runs to 338 residues: Malate dehydrogenase, mitochondrial (338 aa).

Residues 1–24 (MLSALARPASAALRRSFSTSAQNN) constitute a mitochondrion transit peptide. NAD(+) contacts are provided by residues 31-37 (GASGGIG) and Asp57. An O-linked (GlcNAc) serine glycan is attached at Ser33. Residues Lys78 and Lys91 each carry the N6-acetyllysine; alternate modification. N6-succinyllysine; alternate is present on residues Lys78 and Lys91. Arg104 and Arg110 together coordinate substrate. Residues Asn117 and 140-142 (IAN) contribute to the NAD(+) site. Substrate is bound at residue Asn142. The residue at position 165 (Lys165) is an N6-acetyllysine. Arg176 contributes to the substrate binding site. Residue Lys185 is modified to N6-acetyllysine; alternate. Lys185 is subject to N6-succinyllysine; alternate. The active-site Proton acceptor is the His200. Lys203 is modified (N6-succinyllysine). Lys215 and Lys239 each carry N6-acetyllysine; alternate. 2 positions are modified to N6-succinyllysine; alternate: Lys215 and Lys239. An N6-malonyllysine; alternate modification is found at Lys239. Phosphoserine is present on Ser246. Met251 is an NAD(+) binding site. Lys269 is modified (N6-succinyllysine). An N6-acetyllysine; alternate mark is found at Lys296, Lys301, Lys307, Lys314, and Lys324. Lys296, Lys301, Lys307, Lys314, and Lys324 each carry N6-succinyllysine; alternate. Lys307 carries the post-translational modification N6-malonyllysine; alternate. Ser326 is modified (phosphoserine). 3 positions are modified to N6-acetyllysine; alternate: Lys328, Lys329, and Lys335. Lys328 carries the post-translational modification N6-succinyllysine; alternate. An N6-malonyllysine; alternate modification is found at Lys329. An N6-succinyllysine; alternate modification is found at Lys335.

This sequence belongs to the LDH/MDH superfamily. MDH type 1 family. In terms of assembly, homodimer. Post-translationally, acetylation is enhanced by up to 67% after treatment either with trichostin A (TSA) or with nicotinamide (NAM) with the appearance of tri- and tetraacetylations. Glucose also increases acetylation by about 60%.

The protein resides in the mitochondrion matrix. The enzyme catalyses (S)-malate + NAD(+) = oxaloacetate + NADH + H(+). With respect to regulation, enzyme activity is enhanced by acetylation. This is Malate dehydrogenase, mitochondrial (MDH2) from Homo sapiens (Human).